The primary structure comprises 188 residues: GMP synthase [glutamine-hydrolyzing] subunit A (188 aa).

The 188-residue stretch at 1–188 (MIVIMDNGGQ…RNFAKLCGEL (188 aa)) folds into the Glutamine amidotransferase type-1 domain. Catalysis depends on Cys78, which acts as the Nucleophile. Active-site residues include His165 and Glu167.

Heterodimer composed of a glutamine amidotransferase subunit (A) and a GMP-binding subunit (B).

It carries out the reaction XMP + L-glutamine + ATP + H2O = GMP + L-glutamate + AMP + diphosphate + 2 H(+). Its pathway is purine metabolism; GMP biosynthesis; GMP from XMP (L-Gln route): step 1/1. Its function is as follows. Catalyzes the synthesis of GMP from XMP. In Pyrococcus abyssi (strain GE5 / Orsay), this protein is GMP synthase [glutamine-hydrolyzing] subunit A.